The following is a 152-amino-acid chain: SMN complex subunit smn1 (152 aa).

The tract at residues 26 to 51 (KKYHSIEAKGGVSDPDSRLDGEKLIS) is interacts with yip11/gem2. The interval 88–110 (DNKGLSDEKPETRAAETHQEFME) is disordered. The span at 91-108 (GLSDEKPETRAAETHQEF) shows a compositional bias: basic and acidic residues. Residues 130-152 (SWYYAGYYTGLAEGLAKSEQRKD) form a may interact with gem8 region.

The protein belongs to the SMN family. Homooligomer; may form homodimers and homotetramers. Part of the core SMN complex at least composed of smn1, yip11/gem2, gem6, gem7 and gem8. Part of the SMN-Sm complex. Interacts with yip11/gem2; the interaction is direct. Interacts with gem8; the interaction is direct. Interacts with proteins of the Sm complex, including smn1, smb1, smd1, smd2 and smd3.

The protein localises to the nucleus. Functionally, the SMN complex catalyzes the assembly of small nuclear ribonucleoproteins (snRNPs), the building blocks of the spliceosome, and thereby plays an important role in the splicing of cellular pre-mRNAs. Most spliceosomal snRNPs contain a common set of Sm proteins smb1, smd1, smd2, smd3, sme1, smf1 and smg1 that assemble in a heptameric protein ring on the Sm site of the small nuclear RNA to form the core snRNP (Sm core). In the cytosol, the Sm proteins smd1, smd2, sme1, smf1 and smg1 (5Sm) are trapped in an inactive 6S pICln-Sm complex by the chaperone saf5 that controls the assembly of the core snRNP. To assemble core snRNPs, the SMN complex accepts the trapped 5Sm proteins from saf5 forming an intermediate. Binding of snRNA inside 5Sm triggers eviction of the SMN complex, thereby allowing binding of smd3 and smb1 to complete assembly of the core snRNP. Within the SMN complex, smn1 acts as a structural backbone and together with yip11/gem2 it gathers the Sm complex subunits. The sequence is that of SMN complex subunit smn1 from Schizosaccharomyces pombe (strain 972 / ATCC 24843) (Fission yeast).